Here is a 120-residue protein sequence, read N- to C-terminus: Aspartate 1-decarboxylase (120 aa).

S25 functions as the Schiff-base intermediate with substrate; via pyruvic acid in the catalytic mechanism. The residue at position 25 (S25) is a Pyruvic acid (Ser). Position 57 (T57) interacts with substrate. Y58 (proton donor) is an active-site residue. 73–75 (GAA) provides a ligand contact to substrate.

The protein belongs to the PanD family. As to quaternary structure, heterooctamer of four alpha and four beta subunits. Requires pyruvate as cofactor. In terms of processing, is synthesized initially as an inactive proenzyme, which is activated by self-cleavage at a specific serine bond to produce a beta-subunit with a hydroxyl group at its C-terminus and an alpha-subunit with a pyruvoyl group at its N-terminus.

Its subcellular location is the cytoplasm. It catalyses the reaction L-aspartate + H(+) = beta-alanine + CO2. Its pathway is cofactor biosynthesis; (R)-pantothenate biosynthesis; beta-alanine from L-aspartate: step 1/1. Its function is as follows. Catalyzes the pyruvoyl-dependent decarboxylation of aspartate to produce beta-alanine. The protein is Aspartate 1-decarboxylase of Deinococcus radiodurans (strain ATCC 13939 / DSM 20539 / JCM 16871 / CCUG 27074 / LMG 4051 / NBRC 15346 / NCIMB 9279 / VKM B-1422 / R1).